We begin with the raw amino-acid sequence, 79 residues long: Conotoxin ArMSGL-0121 (79 aa).

A signal peptide spans 1 to 20 (MSRLGIMVLTLLLLVFIVTS). Positions 21 to 44 (HQDAGEKQATQRNAINFRWRRSFT) are excised as a propeptide. Intrachain disulfides connect cysteine 52–cysteine 64, cysteine 56–cysteine 73, and cysteine 63–cysteine 77. A Leucine amide modification is found at leucine 78.

Belongs to the conotoxin O3 superfamily. Expressed by the venom duct.

The protein localises to the secreted. The protein is Conotoxin ArMSGL-0121 of Conus arenatus (Sand-dusted cone).